The chain runs to 410 residues: MACIDNAMRALFLLALFCVVHGEKAKSKDNDAKASGPGGSFDITKLGASGNGKTDSTKAVQEAWASACGGTGKQTILIPKGDFLVGPLNFTGPCKGDVTIQVNGNLLATTDLSQYKDHGNWIEILRVDNLVITGKGKLDGQGPAVWSKNSCVKKYDCKILPNSLVMDFVNNGEVSGITLLNSKFFHMNMYKCKDMLIKDVNVTAPGDSPNTDGIHMGDSSGVTITNTVIGVGDDCISIGPGTSKVNITGVTCGPGHGISIGSLGRYKDEKDVTDINVKDCTLKKTANGVRIKAYEDAASVLTASKIHYENIKMEDSGYPIIIDMKYCPNKLCTANGASKVTVKDVTFKNITGTSSTPEAVNLLCTAKIPCTGVTMDDVNIKYSGTNNKTMAVCKNAKGSAKGCLKELACF.

The N-terminal stretch at 1–22 (MACIDNAMRALFLLALFCVVHG) is a signal peptide. 2 N-linked (GlcNAc...) asparagine glycosylation sites follow: Asn89 and Asn201. PbH1 repeat units follow at residues 192–218 (CKDM…HMGD), 219–240 (SSGV…SIGP), 242–262 (TSKV…SIGS), 272–293 (VTDI…RIKA), and 337–377 (ASKV…TMDD). Asp233 serves as the catalytic Proton donor. Cysteines 235 and 252 form a disulfide. N-linked (GlcNAc...) asparagine glycosylation occurs at Asn246. His256 is a catalytic residue. Asn349 carries N-linked (GlcNAc...) asparagine glycosylation. Cysteines 364 and 370 form a disulfide. An N-linked (GlcNAc...) asparagine glycan is attached at Asn387. A disulfide bridge links Cys393 with Cys409.

This sequence belongs to the glycosyl hydrolase 28 family. As to expression, pollen.

The protein localises to the secreted. Its subcellular location is the cell wall. It catalyses the reaction [(1-&gt;4)-alpha-D-galacturonosyl](n) + H2O = alpha-D-galacturonate + [(1-&gt;4)-alpha-D-galacturonosyl](n-1). Its function is as follows. May function in depolymerizing pectin during pollen development, germination, and tube growth. Acts as an exo-polygalacturonase. This is Exopolygalacturonase (PG2C) from Zea mays (Maize).